The primary structure comprises 275 residues: Proteasome subunit beta (275 aa).

Positions methionine 1–alanine 52 are cleaved as a propeptide — removed in mature form; by autocatalysis. Threonine 53 (nucleophile) is an active-site residue.

It belongs to the peptidase T1B family. In terms of assembly, the 20S proteasome core is composed of 14 alpha and 14 beta subunits that assemble into four stacked heptameric rings, resulting in a barrel-shaped structure. The two inner rings, each composed of seven catalytic beta subunits, are sandwiched by two outer rings, each composed of seven alpha subunits. The catalytic chamber with the active sites is on the inside of the barrel. Has a gated structure, the ends of the cylinder being occluded by the N-termini of the alpha-subunits. Is capped by the proteasome-associated ATPase, ARC.

The protein localises to the cytoplasm. It catalyses the reaction Cleavage of peptide bonds with very broad specificity.. It functions in the pathway protein degradation; proteasomal Pup-dependent pathway. With respect to regulation, the formation of the proteasomal ATPase ARC-20S proteasome complex, likely via the docking of the C-termini of ARC into the intersubunit pockets in the alpha-rings, may trigger opening of the gate for substrate entry. Interconversion between the open-gate and close-gate conformations leads to a dynamic regulation of the 20S proteasome proteolysis activity. In terms of biological role, component of the proteasome core, a large protease complex with broad specificity involved in protein degradation. The chain is Proteasome subunit beta from Arthrobacter sp. (strain FB24).